Here is a 128-residue protein sequence, read N- to C-terminus: Small ribosomal subunit protein uS14m (128 aa).

This sequence belongs to the universal ribosomal protein uS14 family. Component of the mitochondrial ribosome small subunit (28S) which comprises a 12S rRNA and about 30 distinct proteins. Interacts with LIAT1.

The protein resides in the mitochondrion. This is Small ribosomal subunit protein uS14m (MRPS14) from Bos taurus (Bovine).